We begin with the raw amino-acid sequence, 129 residues long: uncharacterized protein (129 aa).

Residues 46–66 (FFHFFFSFLLHLISPAVTGGI) form a helical membrane-spanning segment.

Its subcellular location is the membrane. This is an uncharacterized protein from Saccharomyces cerevisiae (strain ATCC 204508 / S288c) (Baker's yeast).